The primary structure comprises 553 residues: Pumilio domain-containing protein 5 (553 aa).

Pumilio repeat units follow at residues Asp-146–Asp-184, Lys-185–Arg-223, Lys-224–Glu-260, Lys-261–Val-296, Lys-297–Asn-335, Ser-347–Glu-384, Cys-386–Asp-421, and Glu-432–Ala-472. The segment at Phe-499–Val-514 is RNA-binding.

As to expression, detected in differentiating oocytes with highest levels observed in developing ooctyes in the distal portion of the proximal gonad.

The protein localises to the cytoplasm. It is found in the P-body. RNA-binding protein that binds to the consensus sequence 5'-CUCUGUAUCUUGU-3' in mRNA 3'-UTRs and modulates mRNA expression and stability. Functions redundantly with puf-6 and puf-7 in oocyte formation and organization, early embryonic cell divisions, and repression of expression of glp-1 and other maternal mRNAs in late oogenesis. This is Pumilio domain-containing protein 5 from Caenorhabditis elegans.